The sequence spans 337 residues: Cholinesterase 2 (337 aa).

Residue Ser99 is the Acyl-ester intermediate of the active site. A disulfide bridge connects residues Cys153 and Cys165. Glu224 (charge relay system) is an active-site residue. A glycan (N-linked (GlcNAc...) asparagine) is linked at Asn290.

The protein belongs to the type-B carboxylesterase/lipase family.

The catalysed reaction is an acylcholine + H2O = a carboxylate + choline + H(+). The chain is Cholinesterase 2 (CHE2) from Branchiostoma lanceolatum (Common lancelet).